Here is a 477-residue protein sequence, read N- to C-terminus: Exodeoxyribonuclease 7 large subunit (477 aa).

The interval Gly-456–Leu-477 is disordered.

The protein belongs to the XseA family. Heterooligomer composed of large and small subunits.

The protein resides in the cytoplasm. It carries out the reaction Exonucleolytic cleavage in either 5'- to 3'- or 3'- to 5'-direction to yield nucleoside 5'-phosphates.. In terms of biological role, bidirectionally degrades single-stranded DNA into large acid-insoluble oligonucleotides, which are then degraded further into small acid-soluble oligonucleotides. The polypeptide is Exodeoxyribonuclease 7 large subunit (Parvibaculum lavamentivorans (strain DS-1 / DSM 13023 / NCIMB 13966)).